A 248-amino-acid chain; its full sequence is Large ribosomal subunit protein uL4 (248 aa).

Disordered regions lie at residues 48 to 96 and 210 to 248; these read GTHK…PVPR and AFSEDRDNPGTSLPKSPTPEDSSDATKARSSRHDDRTGA. Positions 233-248 are enriched in basic and acidic residues; that stretch reads DATKARSSRHDDRTGA.

Belongs to the universal ribosomal protein uL4 family. In terms of assembly, part of the 50S ribosomal subunit.

One of the primary rRNA binding proteins, this protein initially binds near the 5'-end of the 23S rRNA. It is important during the early stages of 50S assembly. It makes multiple contacts with different domains of the 23S rRNA in the assembled 50S subunit and ribosome. In terms of biological role, forms part of the polypeptide exit tunnel. This Tropheryma whipplei (strain Twist) (Whipple's bacillus) protein is Large ribosomal subunit protein uL4.